Reading from the N-terminus, the 125-residue chain is MRIAGVNLPLNKHAVIALTHVYGIGRASAESILQRAGIAPNRKISELNDEEAHAIREIIAEQYKVEGQARGEQQTAIKRLMDIGCYRGLRHRRSLPVRGQRTRTNARTRKGKRKTVAGKKKAVKK.

Residues 92-125 are disordered; sequence RRSLPVRGQRTRTNARTRKGKRKTVAGKKKAVKK.

The protein belongs to the universal ribosomal protein uS13 family. Part of the 30S ribosomal subunit. Forms a loose heterodimer with protein S19. Forms two bridges to the 50S subunit in the 70S ribosome.

Located at the top of the head of the 30S subunit, it contacts several helices of the 16S rRNA. In the 70S ribosome it contacts the 23S rRNA (bridge B1a) and protein L5 of the 50S subunit (bridge B1b), connecting the 2 subunits; these bridges are implicated in subunit movement. Contacts the tRNAs in the A and P-sites. This Pelodictyon phaeoclathratiforme (strain DSM 5477 / BU-1) protein is Small ribosomal subunit protein uS13.